Reading from the N-terminus, the 444-residue chain is Tubulin beta-7 chain (444 aa).

GTP-binding residues include Q11, E69, S138, G142, T143, G144, N204, and N226. Residue E69 participates in Mg(2+) binding.

This sequence belongs to the tubulin family. As to quaternary structure, dimer of alpha and beta chains. A typical microtubule is a hollow water-filled tube with an outer diameter of 25 nm and an inner diameter of 15 nM. Alpha-beta heterodimers associate head-to-tail to form protofilaments running lengthwise along the microtubule wall with the beta-tubulin subunit facing the microtubule plus end conferring a structural polarity. Microtubules usually have 13 protofilaments but different protofilament numbers can be found in some organisms and specialized cells. Requires Mg(2+) as cofactor. As to expression, expressed in roots, leaf sheaths, and suspension cultured cells.

It is found in the cytoplasm. It localises to the cytoskeleton. Its function is as follows. Tubulin is the major constituent of microtubules, a cylinder consisting of laterally associated linear protofilaments composed of alpha- and beta-tubulin heterodimers. Microtubules grow by the addition of GTP-tubulin dimers to the microtubule end, where a stabilizing cap forms. Below the cap, tubulin dimers are in GDP-bound state, owing to GTPase activity of alpha-tubulin. This Oryza sativa subsp. japonica (Rice) protein is Tubulin beta-7 chain (TUBB7).